We begin with the raw amino-acid sequence, 167 residues long: Transcriptional regulator MraZ (167 aa).

SpoVT-AbrB domains are found at residues 8–51 (ESNH…YGDH) and 92–135 (SFPT…NPAT).

This sequence belongs to the MraZ family. As to quaternary structure, forms oligomers.

It is found in the cytoplasm. The protein localises to the nucleoid. The polypeptide is Transcriptional regulator MraZ (Ruegeria pomeroyi (strain ATCC 700808 / DSM 15171 / DSS-3) (Silicibacter pomeroyi)).